The chain runs to 1388 residues: ABC transporter G family member 52 (1388 aa).

Residues 1 to 24 (MDDAGEICSFSRSSSSAREDDEED) are disordered. In terms of domain architecture, ABC transporter 1 spans 135–406 (TNALCITKKI…FKSVGFKCPE (272 aa)). Residue 168-175 (GPPGSGKT) coordinates ATP. Residues 484–697 (ELLKANIYRE…ALNALAVNEF (214 aa)) form the ABC transmembrane type-2 1 domain. Transmembrane regions (helical) follow at residues 503–523 (LYIF…TVFI), 541–561 (ALFY…GPAI), 590–610 (IPIS…VIGF), 621–641 (FLVL…IVAL), 646–666 (VIAS…CGFI), 675–695 (WWIW…LAVN), and 732–752 (ISIG…TICL). Residues 791–1043 (ITFEDIRYSV…ELIKYFEAIQ (253 aa)) enclose the ABC transporter 2 domain. 836 to 843 (GVSGAGKT) is an ATP binding site. The region spanning 1116 to 1330 (TQWLACLWKQ…TLNGLLTSQF (215 aa)) is the ABC transmembrane type-2 2 domain. Transmembrane regions (helical) follow at residues 1136–1156 (IVVR…MFWG), 1167–1183 (LFSI…AMGV), 1223–1243 (FPYI…MVGY), 1250–1270 (FLWY…YGMM), 1280–1300 (MSAV…GFLI), 1305–1325 (IPVW…LNGL), and 1357–1377 (LLWV…FLFG).

The protein belongs to the ABC transporter superfamily. ABCG family. PDR (TC 3.A.1.205) subfamily.

The protein resides in the membrane. May be a general defense protein. The chain is ABC transporter G family member 52 from Oryza sativa subsp. japonica (Rice).